The following is a 232-amino-acid chain: Cytidylate kinase (232 aa).

The interval 1 to 21 is disordered; it reads MSEDTPLVVAMDGPSGTGKSS. 13–21 lines the ATP pocket; sequence GPSGTGKSS.

This sequence belongs to the cytidylate kinase family. Type 1 subfamily.

The protein resides in the cytoplasm. The catalysed reaction is CMP + ATP = CDP + ADP. It catalyses the reaction dCMP + ATP = dCDP + ADP. The protein is Cytidylate kinase of Nocardia farcinica (strain IFM 10152).